Reading from the N-terminus, the 402-residue chain is Endo-polygalacturonase (402 aa).

Residues 1–23 (MEYQSGKRVLSLSLGLIGLFSAS) form the signal peptide. Disulfide bonds link cysteine 41-cysteine 62 and cysteine 115-cysteine 125. The Proton donor role is filled by aspartate 249. Histidine 277 is an active-site residue.

It belongs to the glycosyl hydrolase 28 family. Monomer.

The protein resides in the secreted. The enzyme catalyses (1,4-alpha-D-galacturonosyl)n+m + H2O = (1,4-alpha-D-galacturonosyl)n + (1,4-alpha-D-galacturonosyl)m.. Involved in maceration and soft-rotting of plant tissue. This Pectobacterium parmentieri protein is Endo-polygalacturonase (pehA).